A 1551-amino-acid chain; its full sequence is Serine/threonine-protein kinase MRCK gamma (1551 aa).

Positions 71–337 constitute a Protein kinase domain; sequence FEILKVIGRG…LDDFRKHPFF (267 aa). ATP-binding positions include 77-85 and K100; that span reads IGRGAFGEV. The active-site Proton acceptor is D195. Phosphoserine; by autocatalysis occurs at positions 216 and 228. A Phosphothreonine; by autocatalysis modification is found at T234. Residues 338–408 enclose the AGC-kinase C-terminal domain; the sequence is EGVDWERLAT…TSGSPFDVQS (71 aa). Coiled coils occupy residues 442–675 and 729–801; these read QPQE…TESN and KARR…QARG. The interval 578–605 is disordered; it reads QESSQAKTVHAAPETNGIGSPEGQSQEA. The segment at 820–886 is disordered; that stretch reads TEKDSAKDPG…SHTLRPRSFP (67 aa). The segment covering 839–849 has biased composition (basic and acidic residues); the sequence is AEAELRPEGRR. The segment at 877–926 adopts a Phorbol-ester/DAG-type zinc-finger fold; sequence SHTLRPRSFPSPTKCLRCTSLMLGLGRQGLGCDTCGYFCHSACASQAPPC. Residues 946–1065 enclose the PH domain; it reads GTAYEGFLSV…WLQVLGELQR (120 aa). Positions 1091 to 1365 constitute a CNH domain; the sequence is LPHALCAAVI…RPLNPEGSLF (275 aa). The region spanning 1436-1449 is the CRIB domain; it reads ISPPTNFNHLVHVG. The segment at 1441–1551 is disordered; that stretch reads NFNHLVHVGP…PPDPESESSP (111 aa). Residues 1455 to 1468 show a composition bias toward basic and acidic residues; it reads PNTRDGTRAQEQKS. S1481 is modified (phosphoserine). Residues 1511–1527 show a composition bias toward polar residues; that stretch reads TSLSSESVSCPQGSLSP.

This sequence belongs to the protein kinase superfamily. AGC Ser/Thr protein kinase family. DMPK subfamily. As to quaternary structure, homodimer and homotetramer via the coiled coil regions. Interacts tightly with GTP-bound but not GDP-bound CDC42. It depends on Mg(2+) as a cofactor.

It is found in the cytoplasm. The enzyme catalyses L-seryl-[protein] + ATP = O-phospho-L-seryl-[protein] + ADP + H(+). It carries out the reaction L-threonyl-[protein] + ATP = O-phospho-L-threonyl-[protein] + ADP + H(+). With respect to regulation, maintained in an inactive, closed conformation by an interaction between the kinase domain and the negative autoregulatory C-terminal coiled-coil region. Agonist binding to the phorbol ester binding site disrupts this, releasing the kinase domain to allow N-terminus-mediated dimerization and kinase activation by transautophosphorylation. Its function is as follows. May act as a downstream effector of CDC42 in cytoskeletal reorganization. Contributes to the actomyosin contractility required for cell invasion, through the regulation of MYPT1 and thus MLC2 phosphorylation. This Mus musculus (Mouse) protein is Serine/threonine-protein kinase MRCK gamma.